We begin with the raw amino-acid sequence, 710 residues long: Polyribonucleotide nucleotidyltransferase (710 aa).

2 residues coordinate Mg(2+): Asp-491 and Asp-497. In terms of domain architecture, KH spans 559 to 618; sequence PRLITIKINPEKIRDVIGKGGAVIRALTEETGTQIDISDEGVVTIASVDAAAGQEAKRRI. In terms of domain architecture, S1 motif spans 628 to 696; that stretch reads GKVYEGTVLK…DRGRLKLSMK (69 aa).

The protein belongs to the polyribonucleotide nucleotidyltransferase family. Mg(2+) serves as cofactor.

It localises to the cytoplasm. The enzyme catalyses RNA(n+1) + phosphate = RNA(n) + a ribonucleoside 5'-diphosphate. In terms of biological role, involved in mRNA degradation. Catalyzes the phosphorolysis of single-stranded polyribonucleotides processively in the 3'- to 5'-direction. The polypeptide is Polyribonucleotide nucleotidyltransferase (Herminiimonas arsenicoxydans).